A 553-amino-acid chain; its full sequence is 3-amino-2-hydroxy-4-methoxybenzoate diazotase (553 aa).

Residues 157–167 (ALPAAGATGPA) are compositionally biased toward low complexity. Residues 157–178 (ALPAAGATGPAREGDAPPPAPV) are disordered.

The protein belongs to the ATP-dependent AMP-binding enzyme family.

It carries out the reaction 3-amino-2-hydroxy-4-methoxybenzoate + nitrite + ATP = cremeomycin + AMP + diphosphate + H2O. It functions in the pathway antibiotic biosynthesis. Its function is as follows. Part of a gene cluster involved in the biosynthesis of cremeomycin, a light-sensitive o-diazoquinone with antibacterial and antiproliferative effects. Catalyzes the last step of cremeomycin biosynthesis, the diazotization of 3-amino-2-hydroxy-4-methoxybenzoate (3,2,4-AHMBA) with nitrite to generate cremeomycin. This is 3-amino-2-hydroxy-4-methoxybenzoate diazotase from Streptomyces cremeus.